A 285-amino-acid polypeptide reads, in one-letter code: Putative sugar uptake protein lmo0424 (285 aa).

Helical transmembrane passes span 2-21 (SIYL…PIIA), 31-50 (QLLG…FWIL), 55-77 (TVLS…LLQF), 111-133 (WQTV…GVVM), 146-168 (SVSF…YVVT), 172-194 (FDVT…AIGI), 207-229 (VTFN…LATA), 233-255 (VATS…ILIF), and 262-284 (LEWT…LSLL).

This sequence belongs to the GRP transporter (TC 2.A.7.5) family.

It localises to the cell membrane. In Listeria monocytogenes serovar 1/2a (strain ATCC BAA-679 / EGD-e), this protein is Putative sugar uptake protein lmo0424.